A 161-amino-acid chain; its full sequence is MENLTEDMKTWFEIYMLQNRYIGHLDNDRLERWPEMFTEDCTYEIVPKENADLGLPVGIVHCTNQRMLRDRVVSLRHANIYEEHTYRHMTSGLAIVAQRDGEIDTESNYVVVQTRSNGESNVYQAGKYYDTVVRTPDGLRYKAKRVIYDTSRVQTLLATPI.

The protein belongs to the bacterial ring-hydroxylating dioxygenase beta subunit family. Part of a multicomponent enzyme system composed of a reductase (AndAa), a ferredoxin (AndAb) and a two-subunit oxygenase component (AndAc and AndAd).

The enzyme catalyses anthranilate + NADH + O2 + 3 H(+) = catechol + NH4(+) + CO2 + NAD(+). The catalysed reaction is anthranilate + NADPH + O2 + 3 H(+) = catechol + NH4(+) + CO2 + NADP(+). The protein operates within aromatic compound metabolism; anthranilate degradation via hydroxylation; catechol from anthranilate: step 1/1. Its function is as follows. Oxygenase component of anthranilate dioxygenase multicomponent enzyme system which catalyzes the incorporation of both atoms of molecular oxygen into anthranilate to form catechol. Can also act on benzoate and salicylate but not on 2-chlorobenzoate or o-toluate. This is Anthranilate 1,2-dioxygenase small subunit from Burkholderia cepacia (Pseudomonas cepacia).